Consider the following 194-residue polypeptide: NADH-quinone oxidoreductase subunit B 1 (194 aa).

Residues 1–12 (MGVTPVSNQPLV) show a composition bias toward polar residues. The interval 1–23 (MGVTPVSNQPLVAQQPKGIIDPS) is disordered. C73, C74, C138, and C168 together coordinate [4Fe-4S] cluster.

This sequence belongs to the complex I 20 kDa subunit family. NDH-1 is composed of 14 different subunits. Subunits NuoB, C, D, E, F, and G constitute the peripheral sector of the complex. [4Fe-4S] cluster is required as a cofactor.

Its subcellular location is the cell inner membrane. The enzyme catalyses a quinone + NADH + 5 H(+)(in) = a quinol + NAD(+) + 4 H(+)(out). Functionally, NDH-1 shuttles electrons from NADH, via FMN and iron-sulfur (Fe-S) centers, to quinones in the respiratory chain. The immediate electron acceptor for the enzyme in this species is believed to be ubiquinone. Couples the redox reaction to proton translocation (for every two electrons transferred, four hydrogen ions are translocated across the cytoplasmic membrane), and thus conserves the redox energy in a proton gradient. The polypeptide is NADH-quinone oxidoreductase subunit B 1 (Rhizobium etli (strain ATCC 51251 / DSM 11541 / JCM 21823 / NBRC 15573 / CFN 42)).